The following is a 502-amino-acid chain: Zinc finger protein 488 (502 aa).

The region spanning 8–130 (RSLWTNDSKI…EGEELLVWYD (123 aa)) is the SET domain. An S-adenosyl-L-methionine-binding site is contributed by Tyr129. The C2H2-type 1; atypical zinc finger occupies 151–174 (YTCTRCGQAFKNENPFLAHCRFLC). 2 disordered regions span residues 267–303 (SEPT…KSSR) and 338–361 (PSKR…LDSF). A compositionally biased stretch (polar residues) spans 269 to 286 (PTDNAQTNESKISKNSAF). C2H2-type zinc fingers lie at residues 438 to 460 (NWCA…MRSH) and 479 to 501 (LTCP…MTSH).

This sequence belongs to the krueppel C2H2-type zinc-finger protein family. Expressed in pMN progenitors and oligodendrocyte lineage cells in the embryo with expression declining in oligodendrocytes undergoing differentiation.

The protein resides in the nucleus. In terms of biological role, transcriptional repressor. May have histone methyltransferase activity. Negatively regulates shh signaling activity in pMN progenitor cells which prevents their switch from motor neuron to oligodendrocyte precursor cell production. Independently of shh activity, also regulates oligodendrocyte formation. This chain is Zinc finger protein 488, found in Danio rerio (Zebrafish).